A 249-amino-acid polypeptide reads, in one-letter code: 5'-nucleotidase SurE (249 aa).

A divalent metal cation-binding residues include D8, D9, S39, and N91.

Belongs to the SurE nucleotidase family. A divalent metal cation serves as cofactor.

The protein localises to the cytoplasm. It carries out the reaction a ribonucleoside 5'-phosphate + H2O = a ribonucleoside + phosphate. In terms of biological role, nucleotidase that shows phosphatase activity on nucleoside 5'-monophosphates. The chain is 5'-nucleotidase SurE from Ectopseudomonas mendocina (strain ymp) (Pseudomonas mendocina).